We begin with the raw amino-acid sequence, 154 residues long: UPF0756 membrane protein YtwI (154 aa).

A run of 4 helical transmembrane segments spans residues 8-28, 54-74, 87-107, and 117-137; these read FLILLLAIALIAKNQSLLFAV, WGVTIITIAVLVPIATGEIGF, WIALGAGIAVALIAKNGLTLL, and LVIGTILAVALFGGVAVGPLI.

The protein belongs to the UPF0756 family.

It is found in the cell membrane. This Bacillus subtilis (strain 168) protein is UPF0756 membrane protein YtwI (ytwI).